The chain runs to 363 residues: NAD(P)H-quinone oxidoreductase subunit 1, chloroplastic (363 aa).

The next 8 membrane-spanning stretches (helical) occupy residues 30–50 (LFPIFTLVLGITIGVLVIVWL), 98–118 (FSIGPSIAVISIFLSYSVIPF), 127–147 (LSIGVFFWIAISSIAPVGLLM), 165–185 (AAQSISYEIPLALCVLSISLL), 203–223 (FWGWNLWRQPIGFIVFLISSL), 248–268 (YSGIKFGLFYIASYLNLLVSS), 300–320 (VFGTLIGIFITLAKTYLFLFI), and 336–356 (LLNLGWKFLLPISLGNLLLTT).

Belongs to the complex I subunit 1 family. In terms of assembly, NDH is composed of at least 16 different subunits, 5 of which are encoded in the nucleus.

The protein resides in the plastid. It is found in the chloroplast thylakoid membrane. It catalyses the reaction a plastoquinone + NADH + (n+1) H(+)(in) = a plastoquinol + NAD(+) + n H(+)(out). It carries out the reaction a plastoquinone + NADPH + (n+1) H(+)(in) = a plastoquinol + NADP(+) + n H(+)(out). Its function is as follows. NDH shuttles electrons from NAD(P)H:plastoquinone, via FMN and iron-sulfur (Fe-S) centers, to quinones in the photosynthetic chain and possibly in a chloroplast respiratory chain. The immediate electron acceptor for the enzyme in this species is believed to be plastoquinone. Couples the redox reaction to proton translocation, and thus conserves the redox energy in a proton gradient. This Nicotiana tomentosiformis (Tobacco) protein is NAD(P)H-quinone oxidoreductase subunit 1, chloroplastic.